The primary structure comprises 212 residues: Peptide methionine sulfoxide reductase MsrA (212 aa).

Cysteine 52 is an active-site residue.

Belongs to the MsrA Met sulfoxide reductase family.

It carries out the reaction L-methionyl-[protein] + [thioredoxin]-disulfide + H2O = L-methionyl-(S)-S-oxide-[protein] + [thioredoxin]-dithiol. The catalysed reaction is [thioredoxin]-disulfide + L-methionine + H2O = L-methionine (S)-S-oxide + [thioredoxin]-dithiol. Its function is as follows. Has an important function as a repair enzyme for proteins that have been inactivated by oxidation. Catalyzes the reversible oxidation-reduction of methionine sulfoxide in proteins to methionine. This is Peptide methionine sulfoxide reductase MsrA from Salmonella agona (strain SL483).